We begin with the raw amino-acid sequence, 265 residues long: Thiazole synthase (265 aa).

Lys106 serves as the catalytic Schiff-base intermediate with DXP. 1-deoxy-D-xylulose 5-phosphate-binding positions include Gly167, 193 to 194, and 215 to 216; these read AG and NS.

Belongs to the ThiG family. In terms of assembly, homotetramer. Forms heterodimers with either ThiH or ThiS.

Its subcellular location is the cytoplasm. It catalyses the reaction [ThiS sulfur-carrier protein]-C-terminal-Gly-aminoethanethioate + 2-iminoacetate + 1-deoxy-D-xylulose 5-phosphate = [ThiS sulfur-carrier protein]-C-terminal Gly-Gly + 2-[(2R,5Z)-2-carboxy-4-methylthiazol-5(2H)-ylidene]ethyl phosphate + 2 H2O + H(+). It participates in cofactor biosynthesis; thiamine diphosphate biosynthesis. In terms of biological role, catalyzes the rearrangement of 1-deoxy-D-xylulose 5-phosphate (DXP) to produce the thiazole phosphate moiety of thiamine. Sulfur is provided by the thiocarboxylate moiety of the carrier protein ThiS. In vitro, sulfur can be provided by H(2)S. This chain is Thiazole synthase, found in Prochlorococcus marinus subsp. pastoris (strain CCMP1986 / NIES-2087 / MED4).